The sequence spans 378 residues: Transmembrane 6 superfamily member 2 (378 aa).

A run of 9 helical transmembrane segments spans residues 34–54, 63–83, 110–130, 140–160, 170–190, 219–239, 269–289, 291–311, and 332–352; these read LCVV…VYSL, PLYA…VIAL, IFIC…MAGA, LGLY…PGNI, PTFF…MRIF, LTLI…GLVV, MLMY…ALTF, GCSW…QAQF, and TWAT…LLAL. 2 consecutive EXPERA domains span residues 61–186 and 217–351; these read YDPL…CWAG and ADLT…HLLA.

This sequence belongs to the TM6SF family.

The protein localises to the endoplasmic reticulum membrane. It localises to the endoplasmic reticulum-Golgi intermediate compartment membrane. Functionally, regulator of liver fat metabolism influencing triglyceride secretion and hepatic lipid droplet content. May function as sterol isomerase. The protein is Transmembrane 6 superfamily member 2 (Tm6sf2) of Rattus norvegicus (Rat).